A 961-amino-acid polypeptide reads, in one-letter code: General vesicular transport factor p115 (961 aa).

A globular head region spans residues 1-641; sequence MNFLRGVMGG…SEEDKKEEEV (641 aa). ARM repeat units lie at residues 20–60, 61–121, 123–163, 166–207, 208–253, 255–310, 311–354, 363–408, 420–459, 473–513, 518–571, and 573–630; these read AETI…VGIQ, AMEH…IKQQ, NVTL…IILV, MGVS…VAFE, NAFE…FKEG, YIQR…MFQC, GLLQ…FASV, PAIV…STLL, SAGQ…EQLL, SLLQ…THFL, NVPF…IEKR, and GKEN…AIYK. Ser50 is modified (phosphoserine). At Lys202 the chain carries N6-acetyllysine. Residues 642–929 adopt a coiled-coil conformation; it reads KKTLEQHDSI…FSLKNKLKEL (288 aa). Polar residues predominate over residues 764-782; that stretch reads KSSQLSPGTNEQSSATAGD. 2 disordered regions span residues 764–784 and 929–961; these read KSSQ…GDSE and LGHP…QGHI. Residues 934–955 show a composition bias toward acidic residues; it reads EEEDELESGDQDDEDDEDEDDG. A Phosphoserine modification is found at Ser941.

This sequence belongs to the VDP/USO1/EDE1 family. As to quaternary structure, homodimer. Dimerizes by parallel association of the tails, resulting in an elongated structure with two globular head domains side by side, and a long rod-like tail structure. Interacts with MIF. Post-translationally, phosphorylated in a cell cycle-specific manner; phosphorylated in interphase but not in mitotic cells. Dephosphorylated protein associates with the Golgi membrane; phosphorylation promotes dissociation.

It is found in the cytoplasm. The protein resides in the cytosol. Its subcellular location is the golgi apparatus membrane. Its function is as follows. General vesicular transport factor required for intercisternal transport in the Golgi stack; it is required for transcytotic fusion and/or subsequent binding of the vesicles to the target membrane. May well act as a vesicular anchor by interacting with the target membrane and holding the vesicular and target membranes in proximity. The polypeptide is General vesicular transport factor p115 (USO1) (Bos taurus (Bovine)).